We begin with the raw amino-acid sequence, 364 residues long: BTB/POZ and TAZ domain-containing protein 2 (364 aa).

Positions 34-106 (SDVEIVTSDN…LYSSSLTEDE (73 aa)) constitute a BTB domain. The Nuclear localization signal signature appears at 203–212 (RKKRRRRHRK). Residues 215–316 (DLYMQLSEAM…PDSCRVPLCR (102 aa)) form a TAZ-type zinc finger. The interval 327 to 350 (KMGEDTKWKLLVTRVVSAKAMTSL) is caM-binding.

As to quaternary structure, interacts with CUL3A. Interacts with GTE11/BET10 through the BTB domain. As to expression, preferentially expressed in young leaves and roots.

The protein resides in the nucleus. The protein localises to the cytoplasm. The protein operates within protein modification; protein ubiquitination. In terms of biological role, may act as a substrate-specific adapter of an E3 ubiquitin-protein ligase complex (CUL3-RBX1-BTB) which mediates the ubiquitination and subsequent proteasomal degradation of target proteins. Plays a key role as a component of the TAC1-mediated telomerase activation pathway certainly by targeting a telomerase repressor to degradation. Seems to occupy an integral position in a complex signaling network that perceives, integrates, and responds to multiple, and sometimes competing, signals. Enhances responses to auxin in postgermination and vegetative development. Also negatively regulates ABA- and sugar-mediated inhibition of the germination. Essential for female and male gametophyte development. This Arabidopsis thaliana (Mouse-ear cress) protein is BTB/POZ and TAZ domain-containing protein 2 (BT2).